Here is a 348-residue protein sequence, read N- to C-terminus: GTP 3',8-cyclase (348 aa).

A Radical SAM core domain is found at 24–242 (PFGRAVTYLR…EKQFTLTDID (219 aa)). Arg33 provides a ligand contact to GTP. Cys40 and Cys44 together coordinate [4Fe-4S] cluster. An S-adenosyl-L-methionine-binding site is contributed by Tyr46. Residue Cys47 coordinates [4Fe-4S] cluster. Arg82 contacts GTP. Position 86 (Gly86) interacts with S-adenosyl-L-methionine. A GTP-binding site is contributed by Thr115. An S-adenosyl-L-methionine-binding site is contributed by Ser139. Residue Lys175 participates in GTP binding. Met209 is an S-adenosyl-L-methionine binding site. Cys272 and Cys275 together coordinate [4Fe-4S] cluster. 277–279 (RVR) lines the GTP pocket. Cys289 serves as a coordination point for [4Fe-4S] cluster.

It belongs to the radical SAM superfamily. MoaA family. Monomer and homodimer. Requires [4Fe-4S] cluster as cofactor.

It catalyses the reaction GTP + AH2 + S-adenosyl-L-methionine = (8S)-3',8-cyclo-7,8-dihydroguanosine 5'-triphosphate + 5'-deoxyadenosine + L-methionine + A + H(+). The protein operates within cofactor biosynthesis; molybdopterin biosynthesis. In terms of biological role, catalyzes the cyclization of GTP to (8S)-3',8-cyclo-7,8-dihydroguanosine 5'-triphosphate. This chain is GTP 3',8-cyclase, found in Rhizobium leguminosarum bv. trifolii (strain WSM2304).